The chain runs to 317 residues: Multivesicular body subunit 12B (317 aa).

Positions 1-49 are disordered; the sequence is MRSCFCVRRSRDPPPPQPPPPQRGTDQATMPEVKELSEALPETPMDPIT. The segment covering 13-22 has biased composition (pro residues); the sequence is PPPPQPPPPQ. The region spanning 45 to 191 is the MABP domain; it reads MDPITGVGVV…SMGIWYRMGR (147 aa). Position 99 is a phosphoserine (S99). T120, T202, and T203 each carry phosphothreonine. The segment at 193-218 is disordered; it reads PRNHDSSQPTTPSQSSASSTPAPNLP. Over residues 198 to 214 the composition is skewed to low complexity; sequence SSQPTTPSQSSASSTPA. S222 is modified (phosphoserine). In terms of domain architecture, UMA spans 252–301; sequence MDGVPFMISEKFSCIPESMQPFDLLGITIKSLAEIEKEYEYSFRTEQSAA. A disordered region spans residues 297 to 317; that stretch reads EQSAAARLPPSPTRCQQIPQS. Position 307 is a phosphoserine (S307).

Belongs to the MVB12 family. As to quaternary structure, component of the ESCRT-I complex (endosomal sorting complex required for transport I) which consists of TSG101, VPS28, a VPS37 protein (VPS37A to -D) and MVB12A or MVB12B in a 1:1:1:1 stoichiometry. Interacts with TSG101; the association appears to be mediated by the TSG101-VPS37 binary subcomplex. Interacts with VPS28. Interacts with VPS37B; the association appears to be mediated by the TSG101-VPS37 binary subcomplex. Interacts with VPS37C; the association appears to be mediated by the TSG101-VPS37 binary subcomplex.

Its subcellular location is the endosome. The protein localises to the late endosome membrane. Functionally, component of the ESCRT-I complex, a regulator of vesicular trafficking process. Required for the sorting of endocytic ubiquitinated cargos into multivesicular bodies. The polypeptide is Multivesicular body subunit 12B (Mvb12b) (Mus musculus (Mouse)).